A 165-amino-acid chain; its full sequence is Ribosome maturation factor RimM (165 aa).

In terms of domain architecture, PRC barrel spans 94–165 (EDEFYIADLT…YVILNYQREA (72 aa)).

This sequence belongs to the RimM family. In terms of assembly, binds ribosomal protein uS19.

Its subcellular location is the cytoplasm. Its function is as follows. An accessory protein needed during the final step in the assembly of 30S ribosomal subunit, possibly for assembly of the head region. Essential for efficient processing of 16S rRNA. May be needed both before and after RbfA during the maturation of 16S rRNA. It has affinity for free ribosomal 30S subunits but not for 70S ribosomes. The chain is Ribosome maturation factor RimM from Rickettsia rickettsii (strain Iowa).